The sequence spans 350 residues: Glycerol-1-phosphate dehydrogenase [NAD(P)+] (350 aa).

Residues 97-101 (GSKID) and 119-122 (TTPS) contribute to the NAD(+) site. Residue D124 participates in substrate binding. S128 contributes to the NAD(+) binding site. D171 contributes to the substrate binding site. D171 and H251 together coordinate Zn(2+). H255 contacts substrate. H267 is a Zn(2+) binding site.

It belongs to the glycerol-1-phosphate dehydrogenase family. Requires Zn(2+) as cofactor.

The protein resides in the cytoplasm. It carries out the reaction sn-glycerol 1-phosphate + NAD(+) = dihydroxyacetone phosphate + NADH + H(+). It catalyses the reaction sn-glycerol 1-phosphate + NADP(+) = dihydroxyacetone phosphate + NADPH + H(+). The protein operates within membrane lipid metabolism; glycerophospholipid metabolism. In terms of biological role, catalyzes the NAD(P)H-dependent reduction of dihydroxyacetonephosphate (DHAP or glycerone phosphate) to glycerol 1-phosphate (G1P). The G1P thus generated is used as the glycerophosphate backbone of phospholipids in the cellular membranes of Archaea. The polypeptide is Glycerol-1-phosphate dehydrogenase [NAD(P)+] (Picrophilus torridus (strain ATCC 700027 / DSM 9790 / JCM 10055 / NBRC 100828 / KAW 2/3)).